Reading from the N-terminus, the 153-residue chain is 6,7-dimethyl-8-ribityllumazine synthase (153 aa).

5-amino-6-(D-ribitylamino)uracil is bound by residues Phe-22, 56 to 58 (AFE), and 80 to 82 (AVI). (2S)-2-hydroxy-3-oxobutyl phosphate is bound at residue 85–86 (ST). Residue His-88 is the Proton donor of the active site. Phe-113 serves as a coordination point for 5-amino-6-(D-ribitylamino)uracil. Arg-127 is a (2S)-2-hydroxy-3-oxobutyl phosphate binding site.

It belongs to the DMRL synthase family.

It catalyses the reaction (2S)-2-hydroxy-3-oxobutyl phosphate + 5-amino-6-(D-ribitylamino)uracil = 6,7-dimethyl-8-(1-D-ribityl)lumazine + phosphate + 2 H2O + H(+). It functions in the pathway cofactor biosynthesis; riboflavin biosynthesis; riboflavin from 2-hydroxy-3-oxobutyl phosphate and 5-amino-6-(D-ribitylamino)uracil: step 1/2. Its function is as follows. Catalyzes the formation of 6,7-dimethyl-8-ribityllumazine by condensation of 5-amino-6-(D-ribitylamino)uracil with 3,4-dihydroxy-2-butanone 4-phosphate. This is the penultimate step in the biosynthesis of riboflavin. In Clostridium novyi (strain NT), this protein is 6,7-dimethyl-8-ribityllumazine synthase.